The chain runs to 405 residues: Phosphoglycerate kinase (405 aa).

Residues 24–26 (DFN), R40, 63–66 (HLGR), R122, and R162 contribute to the substrate site. Residues K212, E331, and 361-364 (GGDS) each bind ATP.

This sequence belongs to the phosphoglycerate kinase family. As to quaternary structure, monomer.

The protein resides in the cytoplasm. The enzyme catalyses (2R)-3-phosphoglycerate + ATP = (2R)-3-phospho-glyceroyl phosphate + ADP. Its pathway is carbohydrate degradation; glycolysis; pyruvate from D-glyceraldehyde 3-phosphate: step 2/5. The protein is Phosphoglycerate kinase of Corynebacterium aurimucosum (strain ATCC 700975 / DSM 44827 / CIP 107346 / CN-1) (Corynebacterium nigricans).